Reading from the N-terminus, the 241-residue chain is Large ribosomal subunit protein uL3 (241 aa).

2 disordered regions span residues 139-166 and 209-241; these read VSHR…PGHM and KKPL…KEGA. The residue at position 151 (Gln151) is an N5-methylglutamine.

The protein belongs to the universal ribosomal protein uL3 family. In terms of assembly, part of the 50S ribosomal subunit. Forms a cluster with proteins L14 and L19. Post-translationally, methylated by PrmB.

One of the primary rRNA binding proteins, it binds directly near the 3'-end of the 23S rRNA, where it nucleates assembly of the 50S subunit. This is Large ribosomal subunit protein uL3 from Nitrobacter hamburgensis (strain DSM 10229 / NCIMB 13809 / X14).